The chain runs to 179 residues: Adenine phosphoribosyltransferase (179 aa).

Belongs to the purine/pyrimidine phosphoribosyltransferase family. As to quaternary structure, homodimer.

The protein resides in the cytoplasm. The catalysed reaction is AMP + diphosphate = 5-phospho-alpha-D-ribose 1-diphosphate + adenine. Its pathway is purine metabolism; AMP biosynthesis via salvage pathway; AMP from adenine: step 1/1. In terms of biological role, catalyzes a salvage reaction resulting in the formation of AMP, that is energically less costly than de novo synthesis. This is Adenine phosphoribosyltransferase from Helicobacter pylori (strain HPAG1).